The sequence spans 319 residues: Large ribosomal subunit protein uL10 (319 aa).

The span at 286 to 295 shows a compositional bias: low complexity; that stretch reads ADSGAAAPSA. The interval 286–319 is disordered; the sequence is ADSGAAAPSAAKEEEKKEEPEEESDGDLGMSLFD.

The protein belongs to the universal ribosomal protein uL10 family. As to quaternary structure, P0 forms a pentameric complex by interaction with dimers of P1 and P2. Interacts with NSF. Post-translationally, phosphorylated. Highly expressed in stems, inflorescences and immature seeds (at protein level). Expressed in leaves and mature seeds (at protein level).

In terms of biological role, ribosomal protein P0 is the functional equivalent of E.coli protein L10. The sequence is that of Large ribosomal subunit protein uL10 from Oryza sativa subsp. japonica (Rice).